A 109-amino-acid polypeptide reads, in one-letter code: Cell division protein ZapA (109 aa).

Residues 21 to 99 adopt a coiled-coil conformation; that stretch reads PDQRDALNQA…IEQALLEQGR (79 aa).

It belongs to the ZapA family. Type 1 subfamily. As to quaternary structure, homodimer. Interacts with FtsZ.

The protein localises to the cytoplasm. In terms of biological role, activator of cell division through the inhibition of FtsZ GTPase activity, therefore promoting FtsZ assembly into bundles of protofilaments necessary for the formation of the division Z ring. It is recruited early at mid-cell but it is not essential for cell division. In Shigella boydii serotype 18 (strain CDC 3083-94 / BS512), this protein is Cell division protein ZapA.